A 328-amino-acid polypeptide reads, in one-letter code: D-cysteine desulfhydrase (328 aa).

Lysine 51 is subject to N6-(pyridoxal phosphate)lysine.

The protein belongs to the ACC deaminase/D-cysteine desulfhydrase family. Homodimer. Pyridoxal 5'-phosphate serves as cofactor.

The catalysed reaction is D-cysteine + H2O = hydrogen sulfide + pyruvate + NH4(+) + H(+). Catalyzes the alpha,beta-elimination reaction of D-cysteine and of several D-cysteine derivatives. It could be a defense mechanism against D-cysteine. In Escherichia coli (strain SMS-3-5 / SECEC), this protein is D-cysteine desulfhydrase.